Consider the following 446-residue polypeptide: Argininosuccinate synthase (446 aa).

ATP-binding positions include 17-25 (AFSGGLDTS) and Ala-43. Residue Tyr-99 coordinates L-citrulline. Positions 129 and 131 each coordinate ATP. Residues Thr-131, Asn-135, and Asp-136 each coordinate L-aspartate. Position 135 (Asn-135) interacts with L-citrulline. ATP is bound at residue Asp-136. L-citrulline-binding residues include Arg-139 and Ser-192. Residue Asp-194 participates in ATP binding. L-citrulline contacts are provided by Thr-201, Glu-203, and Glu-280.

The protein belongs to the argininosuccinate synthase family. Type 2 subfamily. As to quaternary structure, homotetramer.

It is found in the cytoplasm. The catalysed reaction is L-citrulline + L-aspartate + ATP = 2-(N(omega)-L-arginino)succinate + AMP + diphosphate + H(+). It participates in amino-acid biosynthesis; L-arginine biosynthesis; L-arginine from L-ornithine and carbamoyl phosphate: step 2/3. The polypeptide is Argininosuccinate synthase (Methylibium petroleiphilum (strain ATCC BAA-1232 / LMG 22953 / PM1)).